The chain runs to 28 residues: Sarcolamban A (28 aa).

Residues 7–27 (LFTTFGILAILLFFLYLIYAV) form a helical membrane-spanning segment.

In terms of assembly, interacts with SERCA. As to expression, strongly expressed in embryonic and larval somatic muscles and postembryonic heart.

It is found in the sarcoplasmic reticulum membrane. Its subcellular location is the cell membrane. The protein localises to the sarcolemma. It localises to the T-tubule. Plays an essential role in the regulation of calcium transport at the sarcoplasmic reticulum (SR), which is secondarily required for regular muscle contraction. The chain is Sarcolamban A from Drosophila melanogaster (Fruit fly).